Here is a 494-residue protein sequence, read N- to C-terminus: MMMTKQKSTLTERLNIGGDEVRELKLGATFNPKNTSTAFHTIKYDFKPASVDTSRMATVDVGSNNQVTVTVPNLESSGVPQTVYKGNHKKYTKECLIIFDKETGAITLERLNHNIQVKKTRSEVTNKPSLMSATNAPMSNGAPVPSSAAAGTGSAGKLENSTMRISSKTKVSTGSRRNNIIDFKPRNSPMQQSSPSRPVASHRSPQSAPAWHANNAQQTLPSIPMIMDDDDFGLSAALHNGSQANISGSSTGSSAGQPDYASVHSGKQRQATPQGHAKRQQLTQRSSPPMQQQQHQNYGRGSNNYAQQQQQQQQQQLQQRASFSHSNHSNSMPMDMDSPTHNEQTAQSMAQAAAALEQQIGGELSASSSSSESDSSDSDSGSDSDDSTEDDRPNHHTNQQLPPAQQPQHHHMQHQQQQHMHQLPNLELGSVSPAYNSHHHHQQQQQSHHHHHHQQQQQQQHQQSGIYASNGGFPNDLLQNDLQLSSNSSDDDDD.

Polar residues predominate over residues 119–138; that stretch reads KTRSEVTNKPSLMSATNAPM. Disordered stretches follow at residues 119-212 and 243-494; these read KTRS…PAWH and QANI…DDDD. The span at 139 to 156 shows a compositional bias: low complexity; that stretch reads SNGAPVPSSAAAGTGSAG. Residues 159–178 are compositionally biased toward polar residues; that stretch reads ENSTMRISSKTKVSTGSRRN. S188 carries the phosphoserine modification. 2 stretches are compositionally biased toward polar residues: residues 243–256 and 280–306; these read QANI…SSAG and QQLT…NNYA. The span at 307–319 shows a compositional bias: low complexity; that stretch reads QQQQQQQQQQLQQ. A compositionally biased stretch (polar residues) spans 320 to 332; that stretch reads RASFSHSNHSNSM. Residues 344–373 show a composition bias toward low complexity; the sequence is QTAQSMAQAAAALEQQIGGELSASSSSSES. Positions 374 to 389 are enriched in acidic residues; sequence DSSDSDSGSDSDDSTE. Low complexity predominate over residues 414 to 424; the sequence is HQQQQHMHQLP. Positions 437–454 are enriched in basic residues; that stretch reads SHHHHQQQQQSHHHHHHQ. 2 stretches are compositionally biased toward low complexity: residues 455-464 and 475-488; these read QQQQQQHQQS and NDLL…SSNS.

Belongs to the EAF family.

It is found in the nucleus. Its function is as follows. Promotes transcriptional elongation by Su(Tpl)/ELL. Essential for development. This Drosophila virilis (Fruit fly) protein is Ell-associated factor Eaf.